We begin with the raw amino-acid sequence, 375 residues long: Chaperone protein DnaJ (375 aa).

Residues Asp-4 to Gly-68 form the J domain. The CR-type zinc-finger motif lies at Gly-134–Thr-216. The Zn(2+) site is built by Cys-147, Cys-150, Cys-164, Cys-167, Cys-190, Cys-193, Cys-204, and Cys-207. CXXCXGXG motif repeat units lie at residues Cys-147 to Gly-154, Cys-164 to Gly-171, Cys-190 to Gly-197, and Cys-204 to Gly-211.

This sequence belongs to the DnaJ family. Homodimer. Zn(2+) is required as a cofactor.

The protein localises to the cytoplasm. Participates actively in the response to hyperosmotic and heat shock by preventing the aggregation of stress-denatured proteins and by disaggregating proteins, also in an autonomous, DnaK-independent fashion. Unfolded proteins bind initially to DnaJ; upon interaction with the DnaJ-bound protein, DnaK hydrolyzes its bound ATP, resulting in the formation of a stable complex. GrpE releases ADP from DnaK; ATP binding to DnaK triggers the release of the substrate protein, thus completing the reaction cycle. Several rounds of ATP-dependent interactions between DnaJ, DnaK and GrpE are required for fully efficient folding. Also involved, together with DnaK and GrpE, in the DNA replication of plasmids through activation of initiation proteins. This is Chaperone protein DnaJ from Rippkaea orientalis (strain PCC 8801 / RF-1) (Cyanothece sp. (strain PCC 8801)).